Consider the following 241-residue polypeptide: MPINRPNLNLNIPPLNIVAAYDGAEIPSTNKHLKNNFNSLHNQMRKMPVSHFKEALDVPDYSGMRQSGFFAMSQGFQLNNHGYDVFIHARRESPQSQGKFAGDKFHISVLRDMVPQAFQALSGLLFSEDSPVDKWKVTDMEKVVQQARVSLGAQFTLYIKPDQENSQYSASFLHKTRQFIECLESRLSENGVISGQCPESDVHPENWKYLSYRNELRSGRDGGEMQRQALREEPFYRLMTE.

His-106 serves as the catalytic Proton donor. Lys-136 functions as the Proton acceptor in the catalytic mechanism.

This sequence belongs to the phosphothreonine lyase family.

It is found in the secreted. Its function is as follows. Secreted effector that irreversibly inactivates host MAP kinases by catalyzing the dephosphorylation of the phosphothreonine residue in the pT-X-pY motif present in MAPKs, via a beta-elimination reaction leading to a dehydrobutyrine residue. This is MAPK phosphothreonine lyase (spvC) from Salmonella enteritidis.